The sequence spans 660 residues: Transcription activator of gluconeogenesis CHGG_09150 (660 aa).

A compositionally biased stretch (acidic residues) spans 1–12; that stretch reads MSDSENEYDETD. Residues 1–52 are disordered; the sequence is MSDSENEYDETDQLVKEEDEKMSDQRLTSEGADTSAEPKKKYDPKDPLRPRR. 2 stretches are compositionally biased toward basic and acidic residues: residues 13-24 and 36-49; these read QLVKEEDEKMSD and AEPK…DPLR. The segment at residues 59–87 is a DNA-binding region (zn(2)-C6 fungal-type); it reads CFACQRAHLTCGDERPCQRCIKRNLMESC. 3 disordered regions span residues 98–144, 170–191, and 319–368; these read LHDA…TFFS, FANQ…QISG, and PTSI…RQSN. The segment covering 129 to 144 has biased composition (polar residues); that stretch reads SIQTSEASSNQGTFFS. Over residues 173–184 the composition is skewed to low complexity; that stretch reads QQSPTSPSFQTS. 2 stretches are compositionally biased toward polar residues: residues 320–332 and 344–368; these read TSIQ…TNSP and TMAT…RQSN. Positions 455-526 constitute a PAS domain; the sequence is SLLEYEEFMH…NSKARVGLAT (72 aa). Residues 587–613 are disordered; the sequence is APDKDDGTGESSTDGQLPQKDPRNSIL.

It belongs to the ERT1/acuK family.

Its subcellular location is the nucleus. In terms of biological role, transcription factor which regulates nonfermentable carbon utilization. Activator of gluconeogenetic genes. In Chaetomium globosum (strain ATCC 6205 / CBS 148.51 / DSM 1962 / NBRC 6347 / NRRL 1970) (Soil fungus), this protein is Transcription activator of gluconeogenesis CHGG_09150.